The following is a 329-amino-acid chain: Glucosyl-3-phosphoglycerate synthase (329 aa).

Residues 55–59, S86, K119, and 139–141 contribute to the UDP-alpha-D-glucose site; these read PALDE and DSD. D141 provides a ligand contact to Mn(2+). A (2R)-3-phosphoglycerate-binding site is contributed by 189 to 192; sequence GRVT. 234 to 237 lines the UDP-alpha-D-glucose pocket; it reads YGVE. H263 provides a ligand contact to Mn(2+). N265 is a binding site for (2R)-3-phosphoglycerate.

This sequence belongs to the glycosyltransferase 2 family. Homodimer. It depends on Mg(2+) as a cofactor. Requires Mn(2+) as cofactor.

The enzyme catalyses an NDP-alpha-D-glucose + (2R)-3-phosphoglycerate = (2R)-2-O-(alpha-D-glucopyranosyl)-3-phospho-glycerate + a ribonucleoside 5'-diphosphate + H(+). It carries out the reaction (2R)-3-phosphoglycerate + UDP-alpha-D-glucose = (2R)-2-O-(alpha-D-glucopyranosyl)-3-phospho-glycerate + UDP + H(+). The catalysed reaction is GDP-D-glucose + (2R)-3-phosphoglycerate = (2R)-2-O-(alpha-D-glucopyranosyl)-3-phospho-glycerate + GDP + H(+). Its function is as follows. Involved in the biosynthesis of 6-O-methylglucose lipopolysaccarides (MGLPs). Catalyzes the transfer of the glucose moiety from UDP-alpha-D-glucose (UDP-Glc) to the position 2 of 3-phospho-D-glycerate (3-PGA) to form glucosyl-3-phosphoglycerate (GPG). To a lesser extent can also use GDP-Glc but not UDP-Gal or UDP-GlcNAc as the sugar donor. The sequence is that of Glucosyl-3-phosphoglycerate synthase from Mycolicibacterium paratuberculosis (strain ATCC BAA-968 / K-10) (Mycobacterium paratuberculosis).